A 215-amino-acid chain; its full sequence is MTPFTQHTGLVAPLDRANVDTDQIIPKQFLKSIKRTGFGPNLFDEWRYLDIGEPGRDNSTRPLNPEFVLNFPRYQGASVLLARENFGCGSSREHAPWALDEYGFRAVIAPSFADIFYNNSFKNGLLPIVLAEAEVDALFEQCLANEGYQLTVDLAAQRVRRPDGVEYSFDIDAFRKHCLLNGLDDIGLTLQEADAIGRFEQDHRARQPWLFGALQ.

It belongs to the LeuD family. LeuD type 1 subfamily. Heterodimer of LeuC and LeuD.

The catalysed reaction is (2R,3S)-3-isopropylmalate = (2S)-2-isopropylmalate. It participates in amino-acid biosynthesis; L-leucine biosynthesis; L-leucine from 3-methyl-2-oxobutanoate: step 2/4. Functionally, catalyzes the isomerization between 2-isopropylmalate and 3-isopropylmalate, via the formation of 2-isopropylmaleate. This is 3-isopropylmalate dehydratase small subunit from Xanthomonas oryzae pv. oryzae (strain MAFF 311018).